The sequence spans 395 residues: Leukosialin (395 aa).

The N-terminal stretch at 1–19 is a signal peptide; that stretch reads MALHLLLLFGACWVQVASP. Residues 20–248 are Extracellular-facing; that stretch reads DSLQRTTMLP…TRSPSQESSG (229 aa). A compositionally biased stretch (polar residues) spans 27-56; it reads MLPSTPHITAPSTSEAQNASPSVSVGSGTV. Positions 27–245 are disordered; sequence MLPSTPHITA…PITTRSPSQE (219 aa). Residues 73-88 show a composition bias toward low complexity; sequence SLTPLETTELSSLETS. Polar residues-rich tracts occupy residues 89–111 and 145–154; these read AGAS…SKTS and TAASTSISKG. Over residues 155–166 the composition is skewed to low complexity; it reads TSAPPTTVTTSS. Asn167 carries N-linked (GlcNAc...) asparagine glycosylation. Over residues 167–196 the composition is skewed to polar residues; that stretch reads NETSGPSVATTVSSKTSGPPVTTATGSLGP. A compositionally biased stretch (low complexity) spans 205–241; sequence ATTATSSVESSSVARGTSVSSRKTSTTSTQDPITTRS. Residues 249–271 form a helical membrane-spanning segment; sequence MLLVPMLIALVVVLALVALLLLW. Positions 272–302 are required for interaction with EZR, MSN and RDX and for co-localization to microvilli; that stretch reads RQRQKRRTGALTLSGGGKRNGVVDAWAGPAR. At 272–395 the chain is on the cytoplasmic side; sequence RQRQKRRTGA…AKDEAAPQSL (124 aa). A Nuclear localization signal motif is present at residues 276 to 290; that stretch reads KRRTGALTLSGGGKR. Residues Ser285 and Ser328 each carry the phosphoserine modification. The segment at 303–395 is disordered; that stretch reads VPDEEATTTS…AKDEAAPQSL (93 aa). A compositionally biased stretch (polar residues) spans 327–338; that stretch reads GSGQRPTLTTFF. Thr333 is modified (phosphothreonine). A phosphoserine mark is found at Ser339 and Ser343. Ser347 bears the Phosphoserine; by PKC/PRKCQ mark. A Phosphoserine modification is found at Ser371. Thr378 carries the phosphothreonine modification. Residues 385-395 are compositionally biased toward basic and acidic residues; the sequence is QAKDEAAPQSL.

As to quaternary structure, interacts with SIGLEC1. In terms of assembly, interacts with isoform 2 of HIPK2. Interacts with CTNNB1. Interacts with RDX (via FERM domain). Interacts with EZR. Interacts with MSN. Phosphorylation at Ser-347 is regulated by chemokines, requires its association with ERM proteins (EZR, RDX and MSN) and is essential for its function in the regulation of T-cell trafficking to lymph nodes. In terms of processing, has a high content of sialic acid and O-linked carbohydrate structures. Post-translationally, cleavage by CTSG releases its extracellular domain and triggers its intramembrane proteolysis by gamma-secretase releasing the CD43 cytoplasmic tail chain (CD43-ct) which translocates to the nucleus. Sumoylated. In terms of tissue distribution, cell surface of thymocytes, T-lymphocytes, neutrophils, plasma cells and myelomas.

Its subcellular location is the membrane. The protein localises to the cell projection. It is found in the microvillus. The protein resides in the uropodium. It localises to the nucleus. Its subcellular location is the PML body. In terms of biological role, predominant cell surface sialoprotein of leukocytes which regulates multiple T-cell functions, including T-cell activation, proliferation, differentiation, trafficking and migration. Positively regulates T-cell trafficking to lymph-nodes via its association with ERM proteins (EZR, RDX and MSN). Negatively regulates Th2 cell differentiation and predisposes the differentiation of T-cells towards a Th1 lineage commitment. Promotes the expression of IFN-gamma by T-cells during T-cell receptor (TCR) activation of naive cells and induces the expression of IFN-gamma by CD4(+) T-cells and to a lesser extent by CD8(+) T-cells. Plays a role in preparing T-cells for cytokine sensing and differentiation into effector cells by inducing the expression of cytokine receptors IFNGR and IL4R, promoting IFNGR and IL4R signaling and by mediating the clustering of IFNGR with TCR. Acts as a major E-selectin ligand responsible for Th17 cell rolling on activated vasculature and recruitment during inflammation. Mediates Th17 cells, but not Th1 cells, adhesion to E-selectin. Acts as a T-cell counter-receptor for SIGLEC1. Protects cells from apoptotic signals, promoting cell survival. This Mus musculus (Mouse) protein is Leukosialin (Spn).